Here is a 397-residue protein sequence, read N- to C-terminus: Digeranylgeranylglycerophospholipid reductase (397 aa).

11 residues coordinate FAD: Ala-15, Glu-34, Cys-45, Gly-46, Gly-48, Arg-101, Ala-125, Glu-163, Asp-284, Gly-296, and Ile-297. Residues Lys-339 and Val-375 each contribute to the a 2,3-bis-O-(geranylgeranyl)-sn-glycerol 1-phospholipid site.

Belongs to the geranylgeranyl reductase family. DGGGPL reductase subfamily. FAD serves as cofactor.

It catalyses the reaction 2,3-bis-O-(phytanyl)-sn-glycerol 1-phosphate + 8 NADP(+) = 2,3-bis-O-(geranylgeranyl)-sn-glycerol 1-phosphate + 8 NADPH + 8 H(+). The catalysed reaction is 2,3-bis-O-(phytanyl)-sn-glycerol 1-phosphate + 8 NAD(+) = 2,3-bis-O-(geranylgeranyl)-sn-glycerol 1-phosphate + 8 NADH + 8 H(+). It carries out the reaction a 2,3-bis-O-phytanyl-sn-glycerol 1-phospholipid + 8 A = a 2,3-bis-O-(geranylgeranyl)-sn-glycerol 1-phospholipid + 8 AH2. The enzyme catalyses CDP-2,3-bis-O-(geranylgeranyl)-sn-glycerol + 8 AH2 = CDP-2,3-bis-O-(phytanyl)-sn-glycerol + 8 A. It catalyses the reaction archaetidylserine + 8 AH2 = 2,3-bis-O-phytanyl-sn-glycero-3-phospho-L-serine + 8 A. Its pathway is membrane lipid metabolism; glycerophospholipid metabolism. In terms of biological role, is involved in the reduction of 2,3-digeranylgeranylglycerophospholipids (unsaturated archaeols) into 2,3-diphytanylglycerophospholipids (saturated archaeols) in the biosynthesis of archaeal membrane lipids. Catalyzes the formation of archaetidic acid (2,3-di-O-phytanyl-sn-glyceryl phosphate) from 2,3-di-O-geranylgeranylglyceryl phosphate (DGGGP) via the hydrogenation of each double bond of the isoprenoid chains. Is also probably able to reduce double bonds of geranyl groups in CDP-2,3-bis-O-(geranylgeranyl)-sn-glycerol and archaetidylserine, thus acting at various stages in the biosynthesis of archaeal membrane lipids. This chain is Digeranylgeranylglycerophospholipid reductase, found in Picrophilus torridus (strain ATCC 700027 / DSM 9790 / JCM 10055 / NBRC 100828 / KAW 2/3).